The chain runs to 203 residues: Guanylate kinase (203 aa).

The Guanylate kinase-like domain maps to 3 to 181; sequence GTLYVVSAPS…TLADLQAIFT (179 aa). 10-17 is a binding site for ATP; that stretch reads APSGAGKT.

The protein belongs to the guanylate kinase family.

Its subcellular location is the cytoplasm. The catalysed reaction is GMP + ATP = GDP + ADP. In terms of biological role, essential for recycling GMP and indirectly, cGMP. This Alkalilimnicola ehrlichii (strain ATCC BAA-1101 / DSM 17681 / MLHE-1) protein is Guanylate kinase.